Reading from the N-terminus, the 339-residue chain is 4-hydroxy-2-oxovalerate aldolase (339 aa).

The region spanning 7–257 (IRIMDTTLRD…QVGVDLYKIM (251 aa)) is the Pyruvate carboxyltransferase domain. 15 to 16 (RD) serves as a coordination point for substrate. Asp16 provides a ligand contact to Mn(2+). His19 (proton acceptor) is an active-site residue. 2 residues coordinate substrate: Ser169 and His196. His196 and His198 together coordinate Mn(2+). Substrate is bound at residue Tyr286.

The protein belongs to the 4-hydroxy-2-oxovalerate aldolase family.

The enzyme catalyses (S)-4-hydroxy-2-oxopentanoate = acetaldehyde + pyruvate. This Pelotomaculum thermopropionicum (strain DSM 13744 / JCM 10971 / SI) protein is 4-hydroxy-2-oxovalerate aldolase.